The sequence spans 516 residues: Myocyte-specific enhancer factor 2A homolog (516 aa).

Residues 1–100 (MGRKKIQITR…KGLNGCESPD (100 aa)) form an interaction with hdac9 region. One can recognise an MADS-box domain in the interval 3 to 57 (RKKIQITRIMDERNRQVTFTKRKFGLMKKAYELSVLCDCEIALIIFNSSNKLFQY). The mef2-type DNA-binding region spans 58-86 (ASTDMDKVLLKYTEYNEPHESRTNSDIVE). The tract at residues 318-339 (PSSKGMMPPLNTQRVTSSQGTQ) is disordered. Residues 327–339 (LNTQRVTSSQGTQ) show a composition bias toward polar residues. Position 343 is a phosphothreonine; by NLK (threonine 343). Serine 386 bears the Phosphoserine; by NLK mark. The segment covering 420 to 433 (GSNLSINTNQNINI) has biased composition (polar residues). The interval 420-516 (GSNLSINTNQ…KRMRMDAWVT (97 aa)) is disordered. The segment covering 465 to 475 (DSLSSSSSSYD) has biased composition (low complexity). Composition is skewed to basic and acidic residues over residues 476 to 486 (GSDREDVRNDF) and 497 to 516 (NNED…AWVT).

Belongs to the MEF2 family. Interacts with hdac9 and nlk2. Restricted to the somitic mesoderm of early embryos. Expressed in the head region of neurula stage embryos and in body muscle (myotomes) of the tadpole. Expressed in all tissues examined in the adult.

It is found in the nucleus. Functionally, may regulate muscle-specific transcription in the embryo and may regulate transcription of a variety of cell types in the adult. Binds to the sequence 5'-CTA[TA]4TAR-3'. Acts downstream of nlk2 in anterior neural development, including eye formation. This chain is Myocyte-specific enhancer factor 2A homolog (mef2a), found in Xenopus laevis (African clawed frog).